Reading from the N-terminus, the 327-residue chain is GMP reductase (327 aa).

The active-site Thioimidate intermediate is the cysteine 175. Residue 204 to 227 coordinates NADP(+); sequence IIADGGIRTHGDVAKSIRFGATMV.

The protein belongs to the IMPDH/GMPR family. GuaC type 2 subfamily.

The catalysed reaction is IMP + NH4(+) + NADP(+) = GMP + NADPH + 2 H(+). Catalyzes the irreversible NADPH-dependent deamination of GMP to IMP. It functions in the conversion of nucleobase, nucleoside and nucleotide derivatives of G to A nucleotides, and in maintaining the intracellular balance of A and G nucleotides. The polypeptide is GMP reductase (Bacillus cereus (strain ATCC 10987 / NRS 248)).